The sequence spans 139 residues: Transcription antitermination protein NusB (139 aa).

It belongs to the NusB family.

Involved in transcription antitermination. Required for transcription of ribosomal RNA (rRNA) genes. Binds specifically to the boxA antiterminator sequence of the ribosomal RNA (rrn) operons. The chain is Transcription antitermination protein NusB from Escherichia coli (strain K12 / MC4100 / BW2952).